A 248-amino-acid chain; its full sequence is UPF0736 protein BCAH187_A1335 (248 aa).

Belongs to the UPF0736 family.

This chain is UPF0736 protein BCAH187_A1335, found in Bacillus cereus (strain AH187).